The chain runs to 154 residues: Protein-export protein SecB (154 aa).

This sequence belongs to the SecB family. Homotetramer, a dimer of dimers. One homotetramer interacts with 1 SecA dimer.

Its subcellular location is the cytoplasm. Functionally, one of the proteins required for the normal export of preproteins out of the cell cytoplasm. It is a molecular chaperone that binds to a subset of precursor proteins, maintaining them in a translocation-competent state. It also specifically binds to its receptor SecA. The chain is Protein-export protein SecB from Blochmanniella pennsylvanica (strain BPEN).